An 828-amino-acid chain; its full sequence is Class I hydrophobin hum3 (828 aa).

A signal peptide spans 1–22 (MKYLQFLAAVAAVSAFSGPVLA). Residues Asn-156, Asn-222, and Asn-738 are each glycosylated (N-linked (GlcNAc...) asparagine). 4 disulfide bridges follow: Cys-750-Cys-808, Cys-757-Cys-802, Cys-758-Cys-788, and Cys-809-Cys-822. Asn-811 carries N-linked (GlcNAc...) asparagine glycosylation.

In the C-terminal section; belongs to the fungal hydrophobin family. In terms of assembly, self-assembles to form functional amyloid fibrils called rodlets. Self-assembly into fibrillar rodlets occurs spontaneously at hydrophobic:hydrophilic interfaces and the rodlets further associate laterally to form amphipathic monolayers. Hum3 is an atypical hydrophobin that consists in a repetitive repellent-like region that spans 578 aa which is separated from a hydrophobin-like domain by a spacer region containing three possible kex2 processing sites. The repetitive region contains 17 amphipathic repeats of 31-36 aa each of them with a C-terminal putative kex2 processing motif.

It localises to the secreted. Its subcellular location is the cell wall. In terms of biological role, aerial growth, conidiation, and dispersal of filamentous fungi in the environment rely upon a capability of their secreting small amphipathic proteins called hydrophobins (HPBs) with low sequence identity. Class I can self-assemble into an outermost layer of rodlet bundles on aerial cell surfaces, conferring cellular hydrophobicity that supports fungal growth, development and dispersal; whereas Class II form highly ordered films at water-air interfaces through intermolecular interactions but contribute nothing to the rodlet structure. Atypical class I hydrophobin that is preceded by a signal sequence and 17 imperfect repeats. The repeated peptides might function as repellents whereas the class I hydrophobin seems not to be crucial for the formation of aerial hyphae. Hydrophobins of Mycosarcoma maydis have been functionally replaced, at least partially, by repellents. Hum3 and rsp1 together are pathogenicity proteins that share an essential function in early stages of the infection. This Mycosarcoma maydis (Corn smut fungus) protein is Class I hydrophobin hum3.